Here is a 100-residue protein sequence, read N- to C-terminus: NADH-quinone oxidoreductase subunit K (100 aa).

The next 3 membrane-spanning stretches (helical) occupy residues 4 to 24 (LTHG…GLVI), 28 to 48 (LLFM…AFVV), and 60 to 80 (VMYI…LALL).

Belongs to the complex I subunit 4L family. As to quaternary structure, NDH-1 is composed of 13 different subunits. Subunits NuoA, H, J, K, L, M, N constitute the membrane sector of the complex.

Its subcellular location is the cell inner membrane. It carries out the reaction a quinone + NADH + 5 H(+)(in) = a quinol + NAD(+) + 4 H(+)(out). In terms of biological role, NDH-1 shuttles electrons from NADH, via FMN and iron-sulfur (Fe-S) centers, to quinones in the respiratory chain. The immediate electron acceptor for the enzyme in this species is believed to be ubiquinone. Couples the redox reaction to proton translocation (for every two electrons transferred, four hydrogen ions are translocated across the cytoplasmic membrane), and thus conserves the redox energy in a proton gradient. The protein is NADH-quinone oxidoreductase subunit K of Salmonella agona (strain SL483).